Reading from the N-terminus, the 421-residue chain is Structure-specific endonuclease subunit SLX1 (421 aa).

The 83-residue stretch at 13-95 (AFYCCYLLRS…QHTKESRHAE (83 aa)) folds into the GIY-YIG domain. Disordered stretches follow at residues 34–57 (TPEP…KTSS) and 96–120 (VERC…KRAG). Residues 225–280 (CGVCKQRLNPRNDMIAICSHSLCRCASHLLCLSAHFLEAAGFIGKLIPKEGTCPAC) form an SLX1-type zinc finger. Basic residues predominate over residues 310–322 (RRRTEQVGKRKIS). A disordered region spans residues 310-339 (RRRTEQVGKRKISNHVSSEKGESEASMPST).

It belongs to the SLX1 family. Forms a heterodimer with SLX4. It depends on a divalent metal cation as a cofactor.

The protein resides in the nucleus. In terms of biological role, catalytic subunit of the SLX1-SLX4 structure-specific endonuclease that resolves DNA secondary structures generated during DNA repair and recombination. Has endonuclease activity towards branched DNA substrates, introducing single-strand cuts in duplex DNA close to junctions with ss-DNA. The polypeptide is Structure-specific endonuclease subunit SLX1 (Ajellomyces capsulatus (strain G186AR / H82 / ATCC MYA-2454 / RMSCC 2432) (Darling's disease fungus)).